The sequence spans 150 residues: Aspartate 1-decarboxylase (150 aa).

The Schiff-base intermediate with substrate; via pyruvic acid role is filled by S25. The residue at position 25 (S25) is a Pyruvic acid (Ser). Residue T57 participates in substrate binding. Y58 (proton donor) is an active-site residue. G73–A75 lines the substrate pocket.

This sequence belongs to the PanD family. As to quaternary structure, heterooctamer of four alpha and four beta subunits. It depends on pyruvate as a cofactor. Is synthesized initially as an inactive proenzyme, which is activated by self-cleavage at a specific serine bond to produce a beta-subunit with a hydroxyl group at its C-terminus and an alpha-subunit with a pyruvoyl group at its N-terminus.

It is found in the cytoplasm. It carries out the reaction L-aspartate + H(+) = beta-alanine + CO2. The protein operates within cofactor biosynthesis; (R)-pantothenate biosynthesis; beta-alanine from L-aspartate: step 1/1. Its function is as follows. Catalyzes the pyruvoyl-dependent decarboxylation of aspartate to produce beta-alanine. The protein is Aspartate 1-decarboxylase of Kocuria rhizophila (strain ATCC 9341 / DSM 348 / NBRC 103217 / DC2201).